The sequence spans 564 residues: Chaperonin GroEL 2 (564 aa).

ATP contacts are provided by residues 29-32, 86-90, G413, and D493; these read TIGP and DGTTT. The tract at residues 521–541 is disordered; sequence DKPEPPAPAGDGGGDPMGGMG. Gly residues predominate over residues 530–541; sequence GDGGGDPMGGMG.

Belongs to the chaperonin (HSP60) family. In terms of assembly, forms a cylinder of 14 subunits composed of two heptameric rings stacked back-to-back. Interacts with the co-chaperonin GroES.

It localises to the cytoplasm. The catalysed reaction is ATP + H2O + a folded polypeptide = ADP + phosphate + an unfolded polypeptide.. In terms of biological role, together with its co-chaperonin GroES, plays an essential role in assisting protein folding. The GroEL-GroES system forms a nano-cage that allows encapsulation of the non-native substrate proteins and provides a physical environment optimized to promote and accelerate protein folding. This Prochlorococcus marinus (strain MIT 9303) protein is Chaperonin GroEL 2.